The chain runs to 135 residues: Large ribosomal subunit protein uL22 (135 aa).

Belongs to the universal ribosomal protein uL22 family. In terms of assembly, part of the 50S ribosomal subunit.

This protein binds specifically to 23S rRNA; its binding is stimulated by other ribosomal proteins, e.g. L4, L17, and L20. It is important during the early stages of 50S assembly. It makes multiple contacts with different domains of the 23S rRNA in the assembled 50S subunit and ribosome. Its function is as follows. The globular domain of the protein is located near the polypeptide exit tunnel on the outside of the subunit, while an extended beta-hairpin is found that lines the wall of the exit tunnel in the center of the 70S ribosome. This Malacoplasma penetrans (strain HF-2) (Mycoplasma penetrans) protein is Large ribosomal subunit protein uL22.